The primary structure comprises 340 residues: S-adenosylmethionine:tRNA ribosyltransferase-isomerase (340 aa).

It belongs to the QueA family. Monomer.

The protein resides in the cytoplasm. The enzyme catalyses 7-aminomethyl-7-carbaguanosine(34) in tRNA + S-adenosyl-L-methionine = epoxyqueuosine(34) in tRNA + adenine + L-methionine + 2 H(+). It functions in the pathway tRNA modification; tRNA-queuosine biosynthesis. In terms of biological role, transfers and isomerizes the ribose moiety from AdoMet to the 7-aminomethyl group of 7-deazaguanine (preQ1-tRNA) to give epoxyqueuosine (oQ-tRNA). The polypeptide is S-adenosylmethionine:tRNA ribosyltransferase-isomerase (Campylobacter concisus (strain 13826)).